We begin with the raw amino-acid sequence, 375 residues long: DNA replication and repair protein RecF (375 aa).

30-37 (GENAQGKT) is an ATP binding site.

This sequence belongs to the RecF family.

The protein resides in the cytoplasm. Functionally, the RecF protein is involved in DNA metabolism; it is required for DNA replication and normal SOS inducibility. RecF binds preferentially to single-stranded, linear DNA. It also seems to bind ATP. The polypeptide is DNA replication and repair protein RecF (Bacillus cereus (strain B4264)).